Here is a 598-residue protein sequence, read N- to C-terminus: Vanadium-dependent bromoperoxidase (598 aa).

Positions 361, 363, 365, 368, and 370 each coordinate Ca(2+). Lysine 400 and arginine 408 together coordinate vanadate. The active site involves histidine 480. Vanadate is bound by residues serine 485, glycine 486, histidine 487, arginine 547, and histidine 553. The active site involves histidine 487.

This sequence belongs to the vanadium-dependent haloperoxidase family. As to quaternary structure, homododecamer. Requires Ca(2+) as cofactor. It depends on vanadate as a cofactor.

It carries out the reaction RH + Br(-) + H2O2 = RBr + 2 H2O.. Its function is as follows. Catalyzes the halogenation of organic substrates in the presence of hydrogen peroxide. This Corallina officinalis (Coral seaweed) protein is Vanadium-dependent bromoperoxidase.